Consider the following 197-residue polypeptide: ATP-dependent Clp protease proteolytic subunit (197 aa).

Catalysis depends on serine 102, which acts as the Nucleophile. Histidine 127 is a catalytic residue.

This sequence belongs to the peptidase S14 family. As to quaternary structure, fourteen ClpP subunits assemble into 2 heptameric rings which stack back to back to give a disk-like structure with a central cavity, resembling the structure of eukaryotic proteasomes.

Its subcellular location is the cytoplasm. The enzyme catalyses Hydrolysis of proteins to small peptides in the presence of ATP and magnesium. alpha-casein is the usual test substrate. In the absence of ATP, only oligopeptides shorter than five residues are hydrolyzed (such as succinyl-Leu-Tyr-|-NHMec, and Leu-Tyr-Leu-|-Tyr-Trp, in which cleavage of the -Tyr-|-Leu- and -Tyr-|-Trp bonds also occurs).. Cleaves peptides in various proteins in a process that requires ATP hydrolysis. Has a chymotrypsin-like activity. Plays a major role in the degradation of misfolded proteins. The sequence is that of ATP-dependent Clp protease proteolytic subunit from Buchnera aphidicola subsp. Schizaphis graminum (strain Sg).